A 1938-amino-acid polypeptide reads, in one-letter code: Myosin-6 (1938 aa).

Residues 32–81 (DIRTECFVPDDKEEYVKAKVVSREGGKVTAETENGKTVTIKEDQVMQQNP) form the Myosin N-terminal SH3-like domain. In terms of domain architecture, Myosin motor spans 85–780 (DKIEDMAMLT…LLGLLEEMRD (696 aa)). Lysine 129 is modified (N6,N6,N6-trimethyllysine). 178–185 (GESGAGKT) is an ATP binding site. Threonine 379 bears the Phosphothreonine mark. Serine 417 carries the post-translational modification Phosphoserine. Actin-binding regions lie at residues 657-679 (LNKL…IPNE) and 759-773 (KFGH…GLLG). Residues 783-812 (LSRIITRIQAQARGQLMRIEFKKIVERRDA) enclose the IQ domain. Calmodulin-binding regions lie at residues 790 to 807 (IQAQ…KKIV) and 816 to 833 (IQWN…PWMK). Residues 842–1938 (LKSAETEKEM…IGAKKMHDEE (1097 aa)) are a coiled coil. 2 positions are modified to phosphoserine: serine 1090 and serine 1139. Tyrosine 1261 bears the Phosphotyrosine mark. Serine 1271 is subject to Phosphoserine. Phosphothreonine occurs at positions 1277 and 1284. Serine 1309 carries the post-translational modification Phosphoserine. Tyrosine 1310 carries the phosphotyrosine modification. Threonine 1311 carries the post-translational modification Phosphothreonine. Phosphoserine is present on serine 1512. Threonine 1515 bears the Phosphothreonine mark. A disordered region spans residues 1909 to 1938 (EERADIAESQVNKLRAKSRDIGAKKMHDEE). The span at 1925–1938 (KSRDIGAKKMHDEE) shows a compositional bias: basic and acidic residues.

It belongs to the TRAFAC class myosin-kinesin ATPase superfamily. Myosin family. In terms of assembly, muscle myosin is a hexameric protein that consists of 2 heavy chain subunits (MHC), 2 alkali light chain subunits (MLC) and 2 regulatory light chain subunits (MLC-2).

The protein localises to the cytoplasm. Its subcellular location is the myofibril. In terms of biological role, muscle contraction. The polypeptide is Myosin-6 (Myh6) (Mus musculus (Mouse)).